Reading from the N-terminus, the 496-residue chain is L-arabinose isomerase (496 aa).

4 residues coordinate Mn(2+): E305, E330, H347, and H446.

The protein belongs to the arabinose isomerase family. The cofactor is Mn(2+).

The enzyme catalyses beta-L-arabinopyranose = L-ribulose. It participates in carbohydrate degradation; L-arabinose degradation via L-ribulose; D-xylulose 5-phosphate from L-arabinose (bacterial route): step 1/3. Catalyzes the conversion of L-arabinose to L-ribulose. This chain is L-arabinose isomerase, found in Bacillus subtilis (strain 168).